We begin with the raw amino-acid sequence, 347 residues long: Biotin synthase (347 aa).

One can recognise a Radical SAM core domain in the interval 54–273; it reads NHVETASLLS…IAVARIMMPK (220 aa). Residues cysteine 69, cysteine 73, and cysteine 76 each coordinate [4Fe-4S] cluster. Residues cysteine 113, cysteine 144, cysteine 204, and arginine 277 each contribute to the [2Fe-2S] cluster site.

This sequence belongs to the radical SAM superfamily. Biotin synthase family. As to quaternary structure, homodimer. [4Fe-4S] cluster serves as cofactor. [2Fe-2S] cluster is required as a cofactor.

The catalysed reaction is (4R,5S)-dethiobiotin + (sulfur carrier)-SH + 2 reduced [2Fe-2S]-[ferredoxin] + 2 S-adenosyl-L-methionine = (sulfur carrier)-H + biotin + 2 5'-deoxyadenosine + 2 L-methionine + 2 oxidized [2Fe-2S]-[ferredoxin]. It functions in the pathway cofactor biosynthesis; biotin biosynthesis; biotin from 7,8-diaminononanoate: step 2/2. Its function is as follows. Catalyzes the conversion of dethiobiotin (DTB) to biotin by the insertion of a sulfur atom into dethiobiotin via a radical-based mechanism. This chain is Biotin synthase, found in Afipia carboxidovorans (strain ATCC 49405 / DSM 1227 / KCTC 32145 / OM5) (Oligotropha carboxidovorans).